A 704-amino-acid chain; its full sequence is Polyribonucleotide nucleotidyltransferase (704 aa).

The Mg(2+) site is built by aspartate 486 and aspartate 492. In terms of domain architecture, KH spans 553-612 (PRIYTMKINPEKIKDVIGKGGSVIRALTDETGTTIEIEDDGTIKIAATDGDKAKHAIRRI). Positions 622-690 (GRIYAGKVTR…RQGRIRLSIK (69 aa)) constitute an S1 motif domain.

This sequence belongs to the polyribonucleotide nucleotidyltransferase family. As to quaternary structure, component of the RNA degradosome, which is a multiprotein complex involved in RNA processing and mRNA degradation. The cofactor is Mg(2+).

Its subcellular location is the cytoplasm. The enzyme catalyses RNA(n+1) + phosphate = RNA(n) + a ribonucleoside 5'-diphosphate. Its function is as follows. Involved in mRNA degradation. Catalyzes the phosphorolysis of single-stranded polyribonucleotides processively in the 3'- to 5'-direction. The sequence is that of Polyribonucleotide nucleotidyltransferase from Yersinia pseudotuberculosis serotype IB (strain PB1/+).